An 81-amino-acid chain; its full sequence is Large ribosomal subunit protein uL23 (81 aa).

The protein belongs to the universal ribosomal protein uL23 family. In terms of assembly, part of the 50S ribosomal subunit. Contacts protein L29.

Functionally, binds to 23S rRNA. One of the proteins that surrounds the polypeptide exit tunnel on the outside of the ribosome. This chain is Large ribosomal subunit protein uL23, found in Pyrobaculum aerophilum (strain ATCC 51768 / DSM 7523 / JCM 9630 / CIP 104966 / NBRC 100827 / IM2).